A 438-amino-acid chain; its full sequence is Sphingomyelinase phosphodiesterase D (438 aa).

Positions 1 to 17 (MKIILILVLVLVVSINA) are cleaved as a signal peptide. The Zn(2+) site is built by Asp27 and His29. Asn40 carries N-linked (GlcNAc...) asparagine glycosylation. Residues Asp111 and Asn148 each contribute to the Zn(2+) site. Asn160 is a glycosylation site (N-linked (GlcNAc...) asparagine). His247 provides a ligand contact to Zn(2+). An N-linked (GlcNAc...) asparagine glycan is attached at Asn271. Positions 287 and 289 each coordinate Zn(2+). N-linked (GlcNAc...) asparagine glycans are attached at residues Asn338 and Asn359.

It belongs to the acid sphingomyelinase family. Zn(2+) is required as a cofactor.

The protein localises to the secreted. This Dictyostelium discoideum (Social amoeba) protein is Sphingomyelinase phosphodiesterase D (sgmD).